We begin with the raw amino-acid sequence, 125 residues long: Cystatin-like cysteine protease inhibitor EPIC2A (125 aa).

A signal peptide spans 1-21 (MSFLRPTLALLAVTALVTTSA). N45 is a glycosylation site (N-linked (GlcNAc...) asparagine). The Secondary area of contact signature appears at 68–72 (QVVSG).

It belongs to the cystatin family.

It is found in the secreted. In terms of biological role, secreted effector that interacts with and inhibits host apoplastic pathogenesis-related papain-like cysteine proteases. Inhibition of host proteases by a pathogen extracellular protease inhibitor forms a specific type of defense-counterdefense mechanism between plants and microbial pathogens. The polypeptide is Cystatin-like cysteine protease inhibitor EPIC2A (Phytophthora infestans (strain T30-4) (Potato late blight agent)).